The primary structure comprises 264 residues: Undecaprenyl-diphosphatase (264 aa).

Helical transmembrane passes span 1 to 21 (MTVF…FLPI), 40 to 60 (GLTF…AFFW), 81 to 101 (MFWY…LLEE), 109 to 129 (TPLL…WADA), 140 to 160 (ISMA…IPGV), 183 to 203 (FSFL…LKDI), 211 to 231 (AFIT…SFLL), and 239 to 259 (FALF…LAAA).

The protein belongs to the UppP family.

Its subcellular location is the cell membrane. It carries out the reaction di-trans,octa-cis-undecaprenyl diphosphate + H2O = di-trans,octa-cis-undecaprenyl phosphate + phosphate + H(+). Its function is as follows. Catalyzes the dephosphorylation of undecaprenyl diphosphate (UPP). Confers resistance to bacitracin. The chain is Undecaprenyl-diphosphatase from Pelotomaculum thermopropionicum (strain DSM 13744 / JCM 10971 / SI).